Reading from the N-terminus, the 446-residue chain is Phosphoglucosamine mutase (446 aa).

Ser-103 acts as the Phosphoserine intermediate in catalysis. Residues Ser-103, Asp-242, Asp-244, and Asp-246 each coordinate Mg(2+). Position 103 is a phosphoserine (Ser-103).

Belongs to the phosphohexose mutase family. Requires Mg(2+) as cofactor. Activated by phosphorylation.

It catalyses the reaction alpha-D-glucosamine 1-phosphate = D-glucosamine 6-phosphate. Its function is as follows. Catalyzes the conversion of glucosamine-6-phosphate to glucosamine-1-phosphate. This is Phosphoglucosamine mutase from Vibrio vulnificus (strain CMCP6).